The sequence spans 416 residues: Glutamyl-tRNA reductase (416 aa).

Substrate-binding positions include 49 to 52 (TCNR), S105, 110 to 112 (EPQ), and Q116. The Nucleophile role is filled by C50. 185–190 (GAGETI) contributes to the NADP(+) binding site.

This sequence belongs to the glutamyl-tRNA reductase family. Homodimer.

The enzyme catalyses (S)-4-amino-5-oxopentanoate + tRNA(Glu) + NADP(+) = L-glutamyl-tRNA(Glu) + NADPH + H(+). Its pathway is porphyrin-containing compound metabolism; protoporphyrin-IX biosynthesis; 5-aminolevulinate from L-glutamyl-tRNA(Glu): step 1/2. In terms of biological role, catalyzes the NADPH-dependent reduction of glutamyl-tRNA(Glu) to glutamate 1-semialdehyde (GSA). In Shewanella oneidensis (strain ATCC 700550 / JCM 31522 / CIP 106686 / LMG 19005 / NCIMB 14063 / MR-1), this protein is Glutamyl-tRNA reductase.